The sequence spans 491 residues: Probable glycine dehydrogenase (decarboxylating) subunit 2 (491 aa).

Residue lysine 273 is modified to N6-(pyridoxal phosphate)lysine.

Belongs to the GcvP family. C-terminal subunit subfamily. As to quaternary structure, the glycine cleavage system is composed of four proteins: P, T, L and H. In this organism, the P 'protein' is a heterodimer of two subunits. Pyridoxal 5'-phosphate is required as a cofactor.

It carries out the reaction N(6)-[(R)-lipoyl]-L-lysyl-[glycine-cleavage complex H protein] + glycine + H(+) = N(6)-[(R)-S(8)-aminomethyldihydrolipoyl]-L-lysyl-[glycine-cleavage complex H protein] + CO2. Its function is as follows. The glycine cleavage system catalyzes the degradation of glycine. The P protein binds the alpha-amino group of glycine through its pyridoxal phosphate cofactor; CO(2) is released and the remaining methylamine moiety is then transferred to the lipoamide cofactor of the H protein. In Bacillus cereus (strain G9842), this protein is Probable glycine dehydrogenase (decarboxylating) subunit 2.